The following is an 829-amino-acid chain: Protein SEY1 homolog 2 (829 aa).

The tract at residues Met1 to Pro21 is disordered. At Met1–Gln728 the chain is on the cytoplasmic side. Positions Gly83 to Pro305 constitute a GB1/RHD3-type G domain. Residue Gly93 to Ser100 coordinates GTP. 2 coiled-coil regions span residues Lys372–Ser396 and Asp576–Leu596. The helical transmembrane segment at Ile729 to Leu749 threads the bilayer. Residues Thr750–Pro752 are Lumenal-facing. Residues Leu753–Leu773 form a helical membrane-spanning segment. The Cytoplasmic portion of the chain corresponds to Gly774 to Lys829.

This sequence belongs to the TRAFAC class dynamin-like GTPase superfamily. GB1/RHD3 GTPase family. RHD3 subfamily.

It is found in the endoplasmic reticulum membrane. Probable GTP-binding protein that may be involved in cell development. The sequence is that of Protein SEY1 homolog 2 from Entamoeba dispar (strain ATCC PRA-260 / SAW760).